Reading from the N-terminus, the 420-residue chain is D-inositol 3-phosphate glycosyltransferase (420 aa).

Residue His13 participates in 1D-myo-inositol 3-phosphate binding. UDP-N-acetyl-alpha-D-glucosamine is bound by residues 19–20 (QP) and Gly27. Residues 24–29 (DAGGMN), Lys82, Tyr115, Thr139, and Arg159 contribute to the 1D-myo-inositol 3-phosphate site. 3 residues coordinate UDP-N-acetyl-alpha-D-glucosamine: Arg233, Lys238, and Val294. 3 residues coordinate Mg(2+): Phe303, Arg304, and Ala306. UDP-N-acetyl-alpha-D-glucosamine contacts are provided by Glu316 and Glu324. Thr330 contacts Mg(2+).

It belongs to the glycosyltransferase group 1 family. MshA subfamily. As to quaternary structure, homodimer.

It carries out the reaction 1D-myo-inositol 3-phosphate + UDP-N-acetyl-alpha-D-glucosamine = 1D-myo-inositol 2-acetamido-2-deoxy-alpha-D-glucopyranoside 3-phosphate + UDP + H(+). Its function is as follows. Catalyzes the transfer of a N-acetyl-glucosamine moiety to 1D-myo-inositol 3-phosphate to produce 1D-myo-inositol 2-acetamido-2-deoxy-glucopyranoside 3-phosphate in the mycothiol biosynthesis pathway. This is D-inositol 3-phosphate glycosyltransferase from Pseudarthrobacter chlorophenolicus (strain ATCC 700700 / DSM 12829 / CIP 107037 / JCM 12360 / KCTC 9906 / NCIMB 13794 / A6) (Arthrobacter chlorophenolicus).